Here is a 407-residue protein sequence, read N- to C-terminus: Arginine deiminase (407 aa).

The Amidino-cysteine intermediate role is filled by cysteine 397.

This sequence belongs to the arginine deiminase family.

Its subcellular location is the cytoplasm. The catalysed reaction is L-arginine + H2O = L-citrulline + NH4(+). It functions in the pathway amino-acid degradation; L-arginine degradation via ADI pathway; carbamoyl phosphate from L-arginine: step 1/2. The polypeptide is Arginine deiminase (Listeria welshimeri serovar 6b (strain ATCC 35897 / DSM 20650 / CCUG 15529 / CIP 8149 / NCTC 11857 / SLCC 5334 / V8)).